We begin with the raw amino-acid sequence, 414 residues long: Snake venom metalloproteinase (414 aa).

The N-terminal stretch at 1 to 20 (MIEVLLVTICLAVFPYQGSS) is a signal peptide. A propeptide spanning residues 21-190 (IILESGNVND…KASDLNFNSD (170 aa)) is cleaved from the precursor. Gln-191 carries the pyrrolidone carboxylic acid modification. Residues 197-393 (RYVELVIVAD…YKPQCILNKP (197 aa)) enclose the Peptidase M12B domain. The Ca(2+) site is built by Glu-200 and Asp-284. Cystine bridges form between Cys-308/Cys-388 and Cys-348/Cys-355. Residue His-333 participates in Zn(2+) binding. Glu-334 is a catalytic residue. The Zn(2+) site is built by His-337 and His-343. Residues Cys-388 and Asn-391 each coordinate Ca(2+). A propeptide spanning residues 394–414 (LRIDPVSTPVSGNELLEAGEE) is cleaved from the precursor.

The protein belongs to the venom metalloproteinase (M12B) family. P-I subfamily. Monomer. Zn(2+) serves as cofactor. As to expression, expressed by the venom gland.

The protein localises to the secreted. Functionally, snake venom metalloproteinase that impairs hemostasis in the envenomed animal. The chain is Snake venom metalloproteinase from Crotalus molossus molossus (Northern black-tailed rattlesnake).